Here is a 361-residue protein sequence, read N- to C-terminus: Queuine tRNA-ribosyltransferase (361 aa).

Asp92 acts as the Proton acceptor in catalysis. Residues 92-96, Asp146, Gln189, and Gly216 contribute to the substrate site; that span reads DSGGF. An RNA binding region spans residues 247-253; that stretch reads GVGKPVD. Asp266 functions as the Nucleophile in the catalytic mechanism. An RNA binding; important for wobble base 34 recognition region spans residues 271-275; sequence TRSGR. Zn(2+)-binding residues include Cys304, Cys306, Cys309, and His335.

This sequence belongs to the queuine tRNA-ribosyltransferase family. Homodimer. Within each dimer, one monomer is responsible for RNA recognition and catalysis, while the other monomer binds to the replacement base PreQ1. It depends on Zn(2+) as a cofactor.

The catalysed reaction is 7-aminomethyl-7-carbaguanine + guanosine(34) in tRNA = 7-aminomethyl-7-carbaguanosine(34) in tRNA + guanine. Its pathway is tRNA modification; tRNA-queuosine biosynthesis. In terms of biological role, catalyzes the base-exchange of a guanine (G) residue with the queuine precursor 7-aminomethyl-7-deazaguanine (PreQ1) at position 34 (anticodon wobble position) in tRNAs with GU(N) anticodons (tRNA-Asp, -Asn, -His and -Tyr). Catalysis occurs through a double-displacement mechanism. The nucleophile active site attacks the C1' of nucleotide 34 to detach the guanine base from the RNA, forming a covalent enzyme-RNA intermediate. The proton acceptor active site deprotonates the incoming PreQ1, allowing a nucleophilic attack on the C1' of the ribose to form the product. After dissociation, two additional enzymatic reactions on the tRNA convert PreQ1 to queuine (Q), resulting in the hypermodified nucleoside queuosine (7-(((4,5-cis-dihydroxy-2-cyclopenten-1-yl)amino)methyl)-7-deazaguanosine). The protein is Queuine tRNA-ribosyltransferase of Rickettsia africae (strain ESF-5).